The chain runs to 895 residues: Ras and Rab interactor 2 (895 aa).

An SH2 domain is found at 97-190; it reads WLQLSLSEEE…VLPFTLKLPY (94 aa). Positions 284 to 361 are disordered; the sequence is LSGGLKRPST…KPTPIPPPRL (78 aa). The segment covering 306 to 315 has biased composition (pro residues); the sequence is SPPPRPPPPA. A compositionally biased stretch (polar residues) spans 328-338; it reads TETQTSMPETV. Phosphoserine is present on Ser366. Disordered stretches follow at residues 373–442 and 460–481; these read GAKT…SDSL and SLED…KSKK. The span at 430-441 shows a compositional bias: low complexity; that stretch reads SDMSISTSSSDS. A Phosphoserine modification is found at Ser501. Residue Thr509 is modified to Phosphothreonine. Residues 618 to 757 enclose the VPS9 domain; it reads DGSWKQLKEN…IKNFQEEQAA (140 aa). A Ras-associating domain is found at 787-878; it reads FQNYLRVAFQ…FHFVYKRIKN (92 aa).

This sequence belongs to the RIN (Ras interaction/interference) family. Homotetramer; probably composed of anti-parallel linkage of two parallel dimers. Interacts with Ras. Interacts with RAB5B, with a much higher affinity for GTP-bound activated RAB5B. Does not interact with other members of the Rab family. In terms of tissue distribution, widely expressed. Expressed in heart, kidney, lung placenta. Expressed at low level in skeletal muscle, spleen and peripheral blood.

The protein resides in the cytoplasm. In terms of biological role, ras effector protein. May function as an upstream activator and/or downstream effector for RAB5B in endocytic pathway. May function as a guanine nucleotide exchange (GEF) of RAB5B, required for activating the RAB5 proteins by exchanging bound GDP for free GTP. The protein is Ras and Rab interactor 2 (RIN2) of Homo sapiens (Human).